Here is a 239-residue protein sequence, read N- to C-terminus: 1-(5-phosphoribosyl)-5-[(5-phosphoribosylamino)methylideneamino] imidazole-4-carboxamide isomerase (239 aa).

The Proton acceptor role is filled by aspartate 8. The active-site Proton donor is aspartate 129.

This sequence belongs to the HisA/HisF family.

It localises to the cytoplasm. The enzyme catalyses 1-(5-phospho-beta-D-ribosyl)-5-[(5-phospho-beta-D-ribosylamino)methylideneamino]imidazole-4-carboxamide = 5-[(5-phospho-1-deoxy-D-ribulos-1-ylimino)methylamino]-1-(5-phospho-beta-D-ribosyl)imidazole-4-carboxamide. Its pathway is amino-acid biosynthesis; L-histidine biosynthesis; L-histidine from 5-phospho-alpha-D-ribose 1-diphosphate: step 4/9. This is 1-(5-phosphoribosyl)-5-[(5-phosphoribosylamino)methylideneamino] imidazole-4-carboxamide isomerase from Bacillus cereus (strain B4264).